The following is a 433-amino-acid chain: Homogentisate 1,2-dioxygenase (433 aa).

H288 acts as the Proton acceptor in catalysis. Fe cation-binding residues include H331 and E337. Positions 346 and 367 each coordinate homogentisate. H367 is a binding site for Fe cation.

The protein belongs to the homogentisate dioxygenase family. As to quaternary structure, hexamer; dimer of trimers. It depends on Fe cation as a cofactor.

It carries out the reaction homogentisate + O2 = 4-maleylacetoacetate + H(+). It participates in amino-acid degradation; L-phenylalanine degradation; acetoacetate and fumarate from L-phenylalanine: step 4/6. Involved in the catabolism of homogentisate (2,5-dihydroxyphenylacetate or 2,5-OH-PhAc), a central intermediate in the degradation of phenylalanine and tyrosine. Catalyzes the oxidative ring cleavage of the aromatic ring of homogentisate to yield maleylacetoacetate. This chain is Homogentisate 1,2-dioxygenase, found in Pseudomonas putida (strain W619).